The sequence spans 121 residues: Basic phospholipase A2 daboxin P (121 aa).

7 disulfide bridges follow: Cys26-Cys115, Cys28-Cys44, Cys43-Cys95, Cys49-Cys121, Cys50-Cys88, Cys57-Cys81, and Cys75-Cys86. Tyr27, Gly29, and Gly31 together coordinate Ca(2+). His47 is an active-site residue. Asp48 contributes to the Ca(2+) binding site. Residue Asp89 is part of the active site.

Ca(2+) serves as cofactor. In terms of tissue distribution, expressed by the venom gland.

The protein resides in the secreted. The enzyme catalyses a 1,2-diacyl-sn-glycero-3-phosphocholine + H2O = a 1-acyl-sn-glycero-3-phosphocholine + a fatty acid + H(+). Its function is as follows. Snake venom phospholipase A2 (PLA2) that exhibits anticoagulant activity, probably by binding to factor X and its activated form factor Xa (F10). Shows no cytotoxicity. PLA2 catalyzes the calcium-dependent hydrolysis of the 2-acyl groups in 3-sn-phosphoglycerides. This is Basic phospholipase A2 daboxin P from Daboia russelii (Russel's viper).